A 295-amino-acid chain; its full sequence is Dual specificity protein phosphatase 15 (295 aa).

One can recognise a Tyrosine-protein phosphatase domain in the interval 1 to 141 (MTEGVLPGLY…LEEFGWASSQ (141 aa)). Threonine 2 carries N-myristoyl glycine lipidation. The active-site Phosphocysteine intermediate is the cysteine 85. Residues 251 to 270 (SSSCTLSASTERPDGSSTPG) show a composition bias toward polar residues. The interval 251–272 (SSSCTLSASTERPDGSSTPGNP) is disordered.

The protein belongs to the protein-tyrosine phosphatase family. Non-receptor class dual specificity subfamily. Highly expressed in testis. Expressed in brain; up-regulated in patients with multiple sclerosis gray matter lesions.

The protein localises to the cytoplasm. The protein resides in the cell membrane. It catalyses the reaction O-phospho-L-tyrosyl-[protein] + H2O = L-tyrosyl-[protein] + phosphate. The catalysed reaction is O-phospho-L-seryl-[protein] + H2O = L-seryl-[protein] + phosphate. It carries out the reaction O-phospho-L-threonyl-[protein] + H2O = L-threonyl-[protein] + phosphate. In terms of biological role, may dephosphorylate MAPK13, ATF2, ERBB3, PDGFRB and SNX6. Its function is as follows. May play a role in the regulation of oligodendrocyte differentiation. May play a role in the regulation of myelin formation. Involved in the regulation of Erk1/2 phosphorylation in Schwann cells; the signaling may be linked to the regulation of myelination. This is Dual specificity protein phosphatase 15 from Homo sapiens (Human).